We begin with the raw amino-acid sequence, 101 residues long: Small ubiquitin-related modifier 1 (101 aa).

Ser2 is subject to N-acetylserine. Ser2 bears the Phosphoserine mark. Lys7 is covalently cross-linked (Glycyl lysine isopeptide (Lys-Gly) (interchain with G-Cter in SUMO1); alternate). Residue Lys7 forms a Glycyl lysine isopeptide (Lys-Gly) (interchain with G-Cter in SUMO2); alternate linkage. Ser9 is subject to Phosphoserine. Glycyl lysine isopeptide (Lys-Gly) (interchain with G-Cter in SUMO2) cross-links involve residues Lys16, Lys17, and Lys23. Residues 20–97 form the Ubiquitin-like domain; sequence EYIKLKVIGQ…IEVYHEQTGG (78 aa). A Glycyl lysine isopeptide (Lys-Gly) (interchain with G-Cter in SUMO1) cross-link involves residue Lys25. Ser32 carries the post-translational modification Phosphoserine. Glycyl lysine isopeptide (Lys-Gly) (interchain with G-Cter in SUMO2) cross-links involve residues Lys37, Lys39, Lys45, and Lys46. Residue Gly97 forms a Glycyl lysine isopeptide (Gly-Lys) (interchain with K-? in acceptor proteins) linkage. A propeptide spanning residues 98–101 is cleaved from the precursor; the sequence is HSTV.

The protein belongs to the ubiquitin family. SUMO subfamily. In terms of assembly, covalently attached to KCNB1; UBE2I increases cross-linking with KCNB1 and PIAS1 decreases cross-links with KCNB1. Interacts with SAE2, RANBP2, PIAS1 and PIAS2. Interacts with PRKN. Covalently attached to a number of proteins such as IKFZ1, PML, RANGAP1, HIPK2, SP100, p53, p73-alpha, MDM2, JUN, DNMT3B and TDG. Also interacts with HIF1A, HIPK2, HIPK3, CHD3, EXOSC9, RAD51 and RAD52. Interacts with USP25 (via ts SIM domain); the interaction weakly sumoylates USP25. Interacts with SIMC1, CASP8AP2, RNF111 and SOBP (via SIM domains). Interacts with BHLHE40/DEC1. Interacts with RWDD3. Interacts with UBE2I/UBC9 and this interaction is enhanced in the presence of RWDD3. Interacts with MTA1. Interacts with SENP2. Interacts with HINT1. Post-translationally, cleavage of precursor form by SENP1, SENP2 is necessary for function. In terms of processing, polymeric SUMO1 chains undergo polyubiquitination by RNF4.

Its subcellular location is the nucleus membrane. The protein localises to the nucleus speckle. It is found in the cytoplasm. The protein resides in the nucleus. It localises to the PML body. Its subcellular location is the cell membrane. Ubiquitin-like protein that can be covalently attached to proteins as a monomer or a lysine-linked polymer. Covalent attachment via an isopeptide bond to its substrates requires prior activation by the E1 complex SAE1-SAE2 and linkage to the E2 enzyme UBE2I, and can be promoted by E3 ligases such as PIAS1-4, RANBP2 or CBX4. This post-translational modification on lysine residues of proteins plays a crucial role in a number of cellular processes such as nuclear transport, DNA replication and repair, mitosis and signal transduction. Involved for instance in targeting RANGAP1 to the nuclear pore complex protein RANBP2. Covalently attached to the voltage-gated potassium channel KCNB1; this modulates the gating characteristics of KCNB1. Polymeric SUMO1 chains are also susceptible to polyubiquitination which functions as a signal for proteasomal degradation of modified proteins. May also regulate a network of genes involved in palate development. Covalently attached to ZFHX3. This chain is Small ubiquitin-related modifier 1 (SUMO1), found in Cervus nippon (Sika deer).